Reading from the N-terminus, the 481-residue chain is Alpha-L-arabinofuranosidase 43 (481 aa).

A signal peptide spans 1-19; that stretch reads MRFSVFTAAIAAAFSACCA. 3 N-linked (GlcNAc...) asparagine glycosylation sites follow: asparagine 158, asparagine 176, and asparagine 365.

Belongs to the glycosyl hydrolase 43 family.

The protein resides in the secreted. It catalyses the reaction Hydrolysis of terminal non-reducing alpha-L-arabinofuranoside residues in alpha-L-arabinosides.. Its activity is regulated as follows. Activity is significantly inhibited by SDS and partially inhibited by Ag(+), Fe(3+) and beta-mercaptoethanol. Its function is as follows. Alpha-L-arabinofuranosidase specific for the cleavage of alpha-1,3-linkage. Shows high activity against 4-nitrophenyl alpha-L-arabinofuranoside, debranched arabinan, and sugar beet arabinan. This Humicola insolens (Soft-rot fungus) protein is Alpha-L-arabinofuranosidase 43.